A 119-amino-acid polypeptide reads, in one-letter code: Large ribosomal subunit protein uL18 (119 aa).

The disordered stretch occupies residues 1-20 (MSQIDKASRRQKIKDRSRVK). Basic residues predominate over residues 9-20 (RRQKIKDRSRVK).

Belongs to the universal ribosomal protein uL18 family. Part of the 50S ribosomal subunit; part of the 5S rRNA/L5/L18/L25 subcomplex. Contacts the 5S and 23S rRNAs.

Its function is as follows. This is one of the proteins that bind and probably mediate the attachment of the 5S RNA into the large ribosomal subunit, where it forms part of the central protuberance. The polypeptide is Large ribosomal subunit protein uL18 (Chlorobium phaeobacteroides (strain DSM 266 / SMG 266 / 2430)).